The chain runs to 227 residues: MPIKAILTDIEGTTSAVSFVFDVLFPFAKKHLPGFVRQNAGQPAVASQLQAVRTEAGEPDADVERVIAILLEWIAEDRKATPLKALQGMVWEQGYNAGQLKGHVYPDAVDALKHWHQQGYRLYVYSSGSIQAQQLIFGCSEAGDLSGLFSGYFDTTSGPKREAQSYRTIAQAIECPAENILFLSDIVEELDAAQAAGMITCGLARDGGVLVGHRYVSSFALIDPASF.

It belongs to the HAD-like hydrolase superfamily. MasA/MtnC family. Monomer. Mg(2+) serves as cofactor.

It catalyses the reaction 5-methylsulfanyl-2,3-dioxopentyl phosphate + H2O = 1,2-dihydroxy-5-(methylsulfanyl)pent-1-en-3-one + phosphate. The protein operates within amino-acid biosynthesis; L-methionine biosynthesis via salvage pathway; L-methionine from S-methyl-5-thio-alpha-D-ribose 1-phosphate: step 3/6. It functions in the pathway amino-acid biosynthesis; L-methionine biosynthesis via salvage pathway; L-methionine from S-methyl-5-thio-alpha-D-ribose 1-phosphate: step 4/6. In terms of biological role, bifunctional enzyme that catalyzes the enolization of 2,3-diketo-5-methylthiopentyl-1-phosphate (DK-MTP-1-P) into the intermediate 2-hydroxy-3-keto-5-methylthiopentenyl-1-phosphate (HK-MTPenyl-1-P), which is then dephosphorylated to form the acireductone 1,2-dihydroxy-3-keto-5-methylthiopentene (DHK-MTPene). The protein is Enolase-phosphatase E1 of Pseudomonas savastanoi pv. phaseolicola (strain 1448A / Race 6) (Pseudomonas syringae pv. phaseolicola (strain 1448A / Race 6)).